Here is an 82-residue protein sequence, read N- to C-terminus: Small ribosomal subunit protein uS17 (82 aa).

Belongs to the universal ribosomal protein uS17 family. As to quaternary structure, part of the 30S ribosomal subunit.

In terms of biological role, one of the primary rRNA binding proteins, it binds specifically to the 5'-end of 16S ribosomal RNA. The sequence is that of Small ribosomal subunit protein uS17 from Shewanella frigidimarina (strain NCIMB 400).